We begin with the raw amino-acid sequence, 73 residues long: Large ribosomal subunit protein bL31 (73 aa).

Cysteine 16, cysteine 18, cysteine 38, and cysteine 41 together coordinate Zn(2+).

The protein belongs to the bacterial ribosomal protein bL31 family. Type A subfamily. In terms of assembly, part of the 50S ribosomal subunit. It depends on Zn(2+) as a cofactor.

Functionally, binds the 23S rRNA. In Streptomyces avermitilis (strain ATCC 31267 / DSM 46492 / JCM 5070 / NBRC 14893 / NCIMB 12804 / NRRL 8165 / MA-4680), this protein is Large ribosomal subunit protein bL31.